Consider the following 201-residue polypeptide: UPF0301 protein RHE_CH00966 (201 aa).

Belongs to the UPF0301 (AlgH) family.

The protein is UPF0301 protein RHE_CH00966 of Rhizobium etli (strain ATCC 51251 / DSM 11541 / JCM 21823 / NBRC 15573 / CFN 42).